An 820-amino-acid chain; its full sequence is Inhibitor of nuclear factor kappa-B kinase epsilon subunit homolog 1 (820 aa).

Residues 21-299 form the Protein kinase domain; that stretch reads LFNDESIGKG…TDIFEFQPVT (279 aa). ATP-binding positions include 27–35 and lysine 49; that span reads IGKGAYSEV. The Proton acceptor role is filled by aspartate 149. The tract at residues 758–798 is disordered; that stretch reads SPNKEQFPKPEQDSILESSIDEGSTSFESTPPSSPPDVGSN.

Belongs to the protein kinase superfamily. Ser/Thr protein kinase family. Interacts with allo-1 (via N-terminus); the interaction is direct. Expressed in oocytes.

It is found in the cytoplasm. It catalyses the reaction L-seryl-[protein] + ATP = O-phospho-L-seryl-[protein] + ADP + H(+). The catalysed reaction is L-threonyl-[protein] + ATP = O-phospho-L-threonyl-[protein] + ADP + H(+). Serine/threonine-protein kinase, which plays a role in regulating allophagy, an autophagic process in which paternal organelles, including mitochondria and membranous organelles, are degraded in embryos. Phosphorylates the allophagy receptor allo-1, which is required for allophagy. This Caenorhabditis elegans protein is Inhibitor of nuclear factor kappa-B kinase epsilon subunit homolog 1.